The sequence spans 186 residues: Interferon beta-2 (186 aa).

A signal peptide spans 1–21 (MTHRCLLQMVLLLCFSTTALS). Cys-52 and Cys-161 form a disulfide bridge. 2 N-linked (GlcNAc...) asparagine glycosylation sites follow: Asn-131 and Asn-173.

The protein belongs to the alpha/beta interferon family. In terms of assembly, monomer.

The protein resides in the secreted. In terms of biological role, has antiviral, antibacterial and anticancer activities. This chain is Interferon beta-2 (IFNB2), found in Bos taurus (Bovine).